The sequence spans 1194 residues: ATP-dependent RNA helicase DHX30 (1194 aa).

Residues 1-10 are compositionally biased toward basic and acidic residues; the sequence is MFTLDSFRKD. The segment at 1–27 is disordered; the sequence is MFTLDSFRKDRTQHRQRQCKLPPPRLP. The residue at position 6 (S6) is a Phosphoserine. Residues 53–121 enclose the DRBM domain; sequence PKNLLNSVIG…QAAAAACQLF (69 aa). A disordered region spans residues 153–200; that stretch reads WWRPEPTMPPTSWRQLNPENIRPAGTGGLSRSLGREEEEDEEEELEEG. The segment covering 188–200 has biased composition (acidic residues); that stretch reads EEEEDEEEELEEG. Phosphoserine occurs at positions 226 and 380. A Helicase ATP-binding domain is found at 444–612; that stretch reads LSAIEQHPVV…FGGCPVIKVP (169 aa). 457–464 serves as a coordination point for ATP; it reads GDTGCGKT. Residues 559–562 carry the DEAH box motif; sequence DEVH. Residues 654–827 form the Helicase C-terminal domain; it reads LVTDLVLHID…NLVLQAKIHM (174 aa).

This sequence belongs to the DEAD box helicase family. DEAH subfamily. As to quaternary structure, identified in a complex with TFAM and SSBP1. Interacts (via N-terminus) with ZC3HAV1 (via N-terminal domain) in an RNA-independent manner. Found in a complex with GRSF1, DDX28, FASTKD2 and FASTKD5.

It is found in the cytoplasm. The protein localises to the mitochondrion. Its subcellular location is the mitochondrion matrix. It localises to the mitochondrion nucleoid. It catalyses the reaction ATP + H2O = ADP + phosphate + H(+). RNA-dependent helicase. Plays an important role in the assembly of the mitochondrial large ribosomal subunit. Associates with mitochondrial DNA. Required for optimal function of the zinc-finger antiviral protein ZC3HAV1. Involved in nervous system development and differentiation through its involvement in the up-regulation of a number of genes which are required for neurogenesis, including GSC, NCAM1, neurogenin, and NEUROD. In Rattus norvegicus (Rat), this protein is ATP-dependent RNA helicase DHX30 (Dhx30).